A 293-amino-acid chain; its full sequence is Ribosomal protein L11 methyltransferase (293 aa).

4 residues coordinate S-adenosyl-L-methionine: T145, G166, D188, and N230.

This sequence belongs to the methyltransferase superfamily. PrmA family.

It localises to the cytoplasm. The enzyme catalyses L-lysyl-[protein] + 3 S-adenosyl-L-methionine = N(6),N(6),N(6)-trimethyl-L-lysyl-[protein] + 3 S-adenosyl-L-homocysteine + 3 H(+). Functionally, methylates ribosomal protein L11. The sequence is that of Ribosomal protein L11 methyltransferase from Shewanella denitrificans (strain OS217 / ATCC BAA-1090 / DSM 15013).